Here is a 488-residue protein sequence, read N- to C-terminus: Prostaglandin E2 receptor EP4 subtype (488 aa).

The Extracellular portion of the chain corresponds to 1–19 (MSTPVANASASSMPELLNN). An N-linked (GlcNAc...) asparagine glycan is attached at N7. Residues 20-43 (PVTIPAVMFIFGVVGNLVAIVVLC) form a helical membrane-spanning segment. Residues 44-55 (KSRKEQKETTFY) lie on the Cytoplasmic side of the membrane. A helical transmembrane segment spans residues 56 to 79 (TLVCGLAVTDLLGTLLVSPVTIAT). The Extracellular segment spans residues 80 to 96 (YMKGQWPGGQALCDYST). The cysteines at positions 92 and 170 are disulfide-linked. A helical membrane pass occupies residues 97–115 (FILLFFGLSGLSIICAMSI). Residues 116-135 (ERYLAINHAYFYSHYVDKRL) are Cytoplasmic-facing. Residues 136–160 (AGLTLFAVYASNVLFCALPNMGLGR) traverse the membrane as a helical segment. At 161 to 184 (SRLQFPDTWCFIDWRTNVTAHAAF) the chain is on the extracellular side. N177 is a glycosylation site (N-linked (GlcNAc...) asparagine). The helical transmembrane segment at 185–211 (SYMYAGFSSFLILATVLCNVLVCGALL) threads the bilayer. Residues 212–270 (RMHRQFMRRTSLGTEQHHAAAAAAVTSAACRGHPTASPALPRLSDFRRRRSFRRIAGAE) are Cytoplasmic-facing. Residues 271–298 (IQMVILLIATSLVVLICSIPLVVRVFIN) form a helical membrane-spanning segment. Topologically, residues 299 to 315 (QLYQPDLVREISQNPDL) are extracellular. A helical transmembrane segment spans residues 316–335 (QAIRIASVNPILDPWIYILL). Topologically, residues 336–488 (RKTVLSKAIE…ETLNLSEKCI (153 aa)) are cytoplasmic. Residues 358 to 371 (RRDRSGQHCSDSRR) are compositionally biased toward basic and acidic residues. Positions 358–381 (RRDRSGQHCSDSRRTSSAMSTHSR) are disordered. Residues 372 to 381 (TSSAMSTHSR) are compositionally biased toward polar residues. Residues S377, S380, S382, and S385 each carry the phosphoserine modification. The interval 456 to 475 (EVGGGGRAGPTPKGSSLQVT) is disordered.

This sequence belongs to the G-protein coupled receptor 1 family. Interacts with FEM1A. Post-translationally, phosphorylation mediates agonist-mediated desensitization by promoting cytoplasmic retention. Highly expressed in intestine, duodenal epithelium, uterus, thymus and adrenal cortex. Lower but significant expression in whole adrenal, lung, spleen, stomach, and kidney. In this latter organ, the receptor is localized in the glomeruli and the transitional epithelium of the renal calyx.

It localises to the cell membrane. Receptor for prostaglandin E2 (PGE2). The activity of this receptor is mediated by G(s) proteins that stimulate adenylate cyclase. Has a relaxing effect on smooth muscle. May play an important role in regulating renal hemodynamics, intestinal epithelial transport, adrenal aldosterone secretion, and uterine function. This Oryctolagus cuniculus (Rabbit) protein is Prostaglandin E2 receptor EP4 subtype (PTGER4).